The primary structure comprises 765 residues: Probable exo-1,4-beta-xylosidase bxlB (765 aa).

The N-terminal stretch at 1-25 (MYSSNSRRAASILACIVSLTQLGFA) is a signal peptide. Asparagine 67 and asparagine 107 each carry an N-linked (GlcNAc...) asparagine glycan. Residue aspartate 293 is part of the active site. N-linked (GlcNAc...) asparagine glycans are attached at residues asparagine 345, asparagine 412, asparagine 423, asparagine 464, and asparagine 761.

The protein belongs to the glycosyl hydrolase 3 family.

Its subcellular location is the secreted. The catalysed reaction is Hydrolysis of (1-&gt;4)-beta-D-xylans, to remove successive D-xylose residues from the non-reducing termini.. It functions in the pathway glycan degradation; xylan degradation. Xylan 1,4-beta-xylosidase involved in the hydrolysis of xylan, a major structural heterogeneous polysaccharide found in plant biomass representing the second most abundant polysaccharide in the biosphere, after cellulose. The chain is Probable exo-1,4-beta-xylosidase bxlB (bxlB) from Aspergillus terreus (strain NIH 2624 / FGSC A1156).